We begin with the raw amino-acid sequence, 404 residues long: Argininosuccinate synthase (404 aa).

Residues 10–18 (AYSGGVDTS) and Ala-38 contribute to the ATP site. Residue Tyr-89 participates in L-citrulline binding. Gly-119 serves as a coordination point for ATP. L-aspartate-binding residues include Thr-121, Asn-125, and Asp-126. Residue Asn-125 coordinates L-citrulline. 5 residues coordinate L-citrulline: Arg-129, Ser-177, Ser-186, Glu-262, and Tyr-274.

The protein belongs to the argininosuccinate synthase family. Type 1 subfamily. As to quaternary structure, homotetramer.

Its subcellular location is the cytoplasm. The enzyme catalyses L-citrulline + L-aspartate + ATP = 2-(N(omega)-L-arginino)succinate + AMP + diphosphate + H(+). It functions in the pathway amino-acid biosynthesis; L-arginine biosynthesis; L-arginine from L-ornithine and carbamoyl phosphate: step 2/3. The chain is Argininosuccinate synthase from Prochlorococcus marinus (strain MIT 9515).